The primary structure comprises 273 residues: NH(3)-dependent NAD(+) synthetase (273 aa).

34 to 41 serves as a coordination point for ATP; the sequence is GLSGGIDS. Asp40 is a Mg(2+) binding site. A deamido-NAD(+)-binding site is contributed by Arg116. Thr136 contributes to the ATP binding site. Glu141 serves as a coordination point for Mg(2+). ATP is bound by residues Lys165 and Ser187.

Belongs to the NAD synthetase family. Homodimer.

It carries out the reaction deamido-NAD(+) + NH4(+) + ATP = AMP + diphosphate + NAD(+) + H(+). It participates in cofactor biosynthesis; NAD(+) biosynthesis; NAD(+) from deamido-NAD(+) (ammonia route): step 1/1. Functionally, catalyzes the ATP-dependent amidation of deamido-NAD to form NAD. Uses ammonia as a nitrogen source. The polypeptide is NH(3)-dependent NAD(+) synthetase (Trichlorobacter lovleyi (strain ATCC BAA-1151 / DSM 17278 / SZ) (Geobacter lovleyi)).